A 371-amino-acid polypeptide reads, in one-letter code: UDP-N-acetylglucosamine--N-acetylmuramyl-(pentapeptide) pyrophosphoryl-undecaprenol N-acetylglucosamine transferase (371 aa).

UDP-N-acetyl-alpha-D-glucosamine-binding positions include 15 to 17 (TGG), Asn126, Arg169, Ser197, and Gln298.

This sequence belongs to the glycosyltransferase 28 family. MurG subfamily.

The protein localises to the cell inner membrane. It carries out the reaction di-trans,octa-cis-undecaprenyl diphospho-N-acetyl-alpha-D-muramoyl-L-alanyl-D-glutamyl-meso-2,6-diaminopimeloyl-D-alanyl-D-alanine + UDP-N-acetyl-alpha-D-glucosamine = di-trans,octa-cis-undecaprenyl diphospho-[N-acetyl-alpha-D-glucosaminyl-(1-&gt;4)]-N-acetyl-alpha-D-muramoyl-L-alanyl-D-glutamyl-meso-2,6-diaminopimeloyl-D-alanyl-D-alanine + UDP + H(+). Its pathway is cell wall biogenesis; peptidoglycan biosynthesis. Cell wall formation. Catalyzes the transfer of a GlcNAc subunit on undecaprenyl-pyrophosphoryl-MurNAc-pentapeptide (lipid intermediate I) to form undecaprenyl-pyrophosphoryl-MurNAc-(pentapeptide)GlcNAc (lipid intermediate II). The sequence is that of UDP-N-acetylglucosamine--N-acetylmuramyl-(pentapeptide) pyrophosphoryl-undecaprenol N-acetylglucosamine transferase from Paramagnetospirillum magneticum (strain ATCC 700264 / AMB-1) (Magnetospirillum magneticum).